Reading from the N-terminus, the 303-residue chain is Probable 5-dehydro-4-deoxyglucarate dehydratase (303 aa).

The protein belongs to the DapA family.

The enzyme catalyses 5-dehydro-4-deoxy-D-glucarate + H(+) = 2,5-dioxopentanoate + CO2 + H2O. It participates in carbohydrate acid metabolism; D-glucarate degradation; 2,5-dioxopentanoate from D-glucarate: step 2/2. The sequence is that of Probable 5-dehydro-4-deoxyglucarate dehydratase from Pseudomonas syringae pv. syringae (strain B728a).